The primary structure comprises 261 residues: MARVTTQFTGIIMYRQDYRERDLLVKMLTDKIGPAMFFVKNAKKRGFRMTADILPFTHGTYIGSLDENGLSFINTASDTSQYKKIASDISKNAYVTYILALVDSAFNDGRSIGGWFKQVAAALDLIEKGLDEQIITNVIETQLLVAFGVAPVWDRCVVCGRNDLALDFSEQYGGMLCQNHWSLDEHRLYLDRKTAYYLQQFATINLQKLNSIRINPATKRRLQQVLDTLYDNEVGLNLKAKRFIKQMNKWEQNIGKLSMND.

It belongs to the RecO family.

Its function is as follows. Involved in DNA repair and RecF pathway recombination. This Limosilactobacillus reuteri (strain DSM 20016) (Lactobacillus reuteri) protein is DNA repair protein RecO.